The following is a 433-amino-acid chain: Gamma-glutamyl phosphate reductase (433 aa).

Belongs to the gamma-glutamyl phosphate reductase family.

Its subcellular location is the cytoplasm. It carries out the reaction L-glutamate 5-semialdehyde + phosphate + NADP(+) = L-glutamyl 5-phosphate + NADPH + H(+). Its pathway is amino-acid biosynthesis; L-proline biosynthesis; L-glutamate 5-semialdehyde from L-glutamate: step 2/2. Functionally, catalyzes the NADPH-dependent reduction of L-glutamate 5-phosphate into L-glutamate 5-semialdehyde and phosphate. The product spontaneously undergoes cyclization to form 1-pyrroline-5-carboxylate. This is Gamma-glutamyl phosphate reductase from Rhodopseudomonas palustris (strain BisB18).